The following is a 443-amino-acid chain: ATP-dependent protease ATPase subunit HslU (443 aa).

Residues Ile-18, Gly-60 to Glu-65, Asp-256, Glu-321, and Arg-393 contribute to the ATP site.

Belongs to the ClpX chaperone family. HslU subfamily. In terms of assembly, a double ring-shaped homohexamer of HslV is capped on each side by a ring-shaped HslU homohexamer. The assembly of the HslU/HslV complex is dependent on binding of ATP.

It is found in the cytoplasm. Its function is as follows. ATPase subunit of a proteasome-like degradation complex; this subunit has chaperone activity. The binding of ATP and its subsequent hydrolysis by HslU are essential for unfolding of protein substrates subsequently hydrolyzed by HslV. HslU recognizes the N-terminal part of its protein substrates and unfolds these before they are guided to HslV for hydrolysis. The protein is ATP-dependent protease ATPase subunit HslU of Nitrosospira multiformis (strain ATCC 25196 / NCIMB 11849 / C 71).